The chain runs to 168 residues: MSVANSRTAVYPGTFDPITNGHIDLVNRAAPLFERVVVGVAYSPSKGPALSLERRVALAQEALAAHTNVEVRGFDTLLAHFVREMGAGVLLRGLRAVSDFEYEFQMASMNRHLIPEVETLFLTPAEQYSFISSSLVREIARLGGDVSGFVPASVVEALRQVRQSRAQA.

T14 contacts substrate. ATP-binding positions include 14-15 and H22; that span reads TF. Substrate-binding residues include K46, L78, and R92. Residues 93–95, E103, and 128–134 contribute to the ATP site; these read GLR and YSFISSS.

This sequence belongs to the bacterial CoaD family. Homohexamer. Requires Mg(2+) as cofactor.

It localises to the cytoplasm. It catalyses the reaction (R)-4'-phosphopantetheine + ATP + H(+) = 3'-dephospho-CoA + diphosphate. It functions in the pathway cofactor biosynthesis; coenzyme A biosynthesis; CoA from (R)-pantothenate: step 4/5. Functionally, reversibly transfers an adenylyl group from ATP to 4'-phosphopantetheine, yielding dephospho-CoA (dPCoA) and pyrophosphate. The protein is Phosphopantetheine adenylyltransferase of Xanthomonas euvesicatoria pv. vesicatoria (strain 85-10) (Xanthomonas campestris pv. vesicatoria).